The chain runs to 188 residues: Elongation factor P (188 aa).

This sequence belongs to the elongation factor P family.

It localises to the cytoplasm. It participates in protein biosynthesis; polypeptide chain elongation. Its function is as follows. Involved in peptide bond synthesis. Stimulates efficient translation and peptide-bond synthesis on native or reconstituted 70S ribosomes in vitro. Probably functions indirectly by altering the affinity of the ribosome for aminoacyl-tRNA, thus increasing their reactivity as acceptors for peptidyl transferase. The chain is Elongation factor P from Phenylobacterium zucineum (strain HLK1).